A 270-amino-acid chain; its full sequence is Myelin protein zero-like protein 1 (270 aa).

Positions 1–35 are cleaved as a signal peptide; the sequence is MAEAVGAVALIAAPARRRWLWSVLAAMLGLLTARI. The region spanning 36-151 is the Ig-like V-type domain; that stretch reads SALEVHTPKE…DIVVRPGHIR (116 aa). The Extracellular segment spans residues 36–162; that stretch reads SALEVHTPKE…HVVEIDNLLV (127 aa). 2 N-linked (GlcNAc...) asparagine glycosylation sites follow: N50 and N130. A disulfide bridge links C58 with C135. A helical membrane pass occupies residues 163–183; the sequence is FLVWVVVGTVTAVVLGLTLLI. Residues 184-270 are Cytoplasmic-facing; that stretch reads SLVLVVLYRR…SVVYADIRKD (87 aa). Positions 201-257 are disordered; that stretch reads TGCSTSERLSPVKQAPRKCPSDTEGLVKSPPSAGSHQGPVIYAQLDHSGGHHSGKIN. Residues S204, S206, S210, and S221 each carry the phosphoserine modification. The ITIM motif 1 motif lies at 240–245; it reads VIYAQL. Residue Y242 is modified to Phosphotyrosine. A Phosphoserine modification is found at S261. Residues 262-267 carry the ITIM motif 2 motif; it reads VVYADI. Residue Y264 is modified to Phosphotyrosine.

This sequence belongs to the myelin P0 protein family. Interacts with phosphorylated PTPN11/SHP-2. Post-translationally, phosphorylated on tyrosine residues upon stimulation with pervanadate and concanavalin-A (ConA). Phosphorylation at Tyr-242 and Tyr-264 is required for interaction with PTPN11/SHP-2. Dephosphorylated by PTPN11/SHP-2 (in vitro).

It localises to the membrane. In terms of biological role, cell surface receptor, which is involved in signal transduction processes. Recruits PTPN11/SHP-2 to the cell membrane and is a putative substrate of PTPN11/SHP-2. Is a major receptor for concanavalin-A (ConA) and is involved in cellular signaling induced by ConA, which probably includes Src family tyrosine-protein kinases. Isoform 2 seems to have a dominant negative role; it blocks tyrosine phosphorylation of MPZL1 induced by ConA. Isoform 1, but not isoform 2, may be involved in regulation of integrin-mediated cell motility. This Mus musculus (Mouse) protein is Myelin protein zero-like protein 1 (Mpzl1).